The primary structure comprises 299 residues: tRNA pseudouridine synthase B (299 aa).

The active-site Nucleophile is D49. The PUA domain maps to 241-299 (MPRVTVSGRAAARVLHGVAPAVRVEHPDGTTVAVVAANGALLALAEADGGGLRLRKVFG).

The protein belongs to the pseudouridine synthase TruB family. Type 1 subfamily.

The catalysed reaction is uridine(55) in tRNA = pseudouridine(55) in tRNA. Functionally, responsible for synthesis of pseudouridine from uracil-55 in the psi GC loop of transfer RNAs. This chain is tRNA pseudouridine synthase B, found in Symbiobacterium thermophilum (strain DSM 24528 / JCM 14929 / IAM 14863 / T).